The chain runs to 377 residues: uncharacterized protein (377 aa).

Composition is skewed to polar residues over residues 1–11 (MSSIQGTSGSS) and 31–43 (PSGQ…AVGK). 3 disordered regions span residues 1–43 (MSSI…AVGK), 109–141 (SSEE…IARN), and 328–377 (SSSP…RGFQ). The segment covering 334–345 (EDPRSLRDRLRD) has biased composition (basic and acidic residues).

Belongs to the chlamydial CPn_0499/CT_392/TC_0671 family.

This is an uncharacterized protein from Chlamydia trachomatis serovar D (strain ATCC VR-885 / DSM 19411 / UW-3/Cx).